Here is a 380-residue protein sequence, read N- to C-terminus: MHSVRTSTTSTSSMVSSTMHPFDAFNAPQPYQQHHPPRWNIHNPHFSQTNGHSIQKTPSMIKLHSSEGTVPTTNGADTLHQRNMEEKIISAPLHYITGLPGKDIRGKLISAFNEWFRIPDEQLEIIKRVVGLLHVASLLIDDIEDSSKLRRGFPVAHSIFGIPQTINSANYAYFQAQSEVLKLRNCNAAFTIFTEELLRLHRGQGMDLYWRDSLTCPTEEEYLDMVANKTGGLFRLAIKLIQLESDVEDDCVPLVDLLGIIFQIRDDYQNLQNEQYAKNKGFAEDITEGKFSYPIVHSIRSGAANCSSGSSELMNILRQKTDDEAVKRYTICILEKTGSFEYTRRKLTELMAAARAMLAEFGSAEAAGLGGILDFLELKE.

A compositionally biased stretch (low complexity) spans 1–19 (MHSVRTSTTSTSSMVSSTM). The disordered stretch occupies residues 1–55 (MHSVRTSTTSTSSMVSSTMHPFDAFNAPQPYQQHHPPRWNIHNPHFSQTNGHSIQ). Positions 45–55 (HFSQTNGHSIQ) are enriched in polar residues. Residues Lys-102, Arg-105, and His-134 each coordinate isopentenyl diphosphate. 2 residues coordinate Mg(2+): Asp-141 and Asp-145. Arg-150 lines the dimethylallyl diphosphate pocket. Arg-151 provides a ligand contact to isopentenyl diphosphate. 3 residues coordinate dimethylallyl diphosphate: Lys-229, Thr-230, and Gln-263. Asp-266 serves as a coordination point for Mg(2+). Dimethylallyl diphosphate-binding residues include Asn-270, Lys-280, and Lys-290.

Belongs to the FPP/GGPP synthase family. It depends on Mg(2+) as a cofactor.

The enzyme catalyses isopentenyl diphosphate + dimethylallyl diphosphate = (2E)-geranyl diphosphate + diphosphate. The catalysed reaction is isopentenyl diphosphate + (2E)-geranyl diphosphate = (2E,6E)-farnesyl diphosphate + diphosphate. It carries out the reaction isopentenyl diphosphate + (2E,6E)-farnesyl diphosphate = (2E,6E,10E)-geranylgeranyl diphosphate + diphosphate. It functions in the pathway secondary metabolite biosynthesis; terpenoid biosynthesis. In terms of biological role, geranylgeranyl pyrophosphate synthase; part of the cluster A that mediates the biosynthesis of chevalone E and its oxidized derivatives that possess a unique five-membered lactone ring and can synergistically enhance the cytotoxicity of doxorubicin (DOX) in breast cancer cells. Within the pathway, cle6 takes part to the biosynthesis of the molecular scaffold by providing geranylgeranyl pyrophosphate (GGPP) to the prenyltransferase cle5 for C-3 geranylgeranylation of triacetic acid lactone. The molecular scaffold is commonly biosynthesized by a series of enzymes including the non-reducing polyketide synthase (NR-PKS) cle1 that produces the alpha-pyrone triacetic acid lactone (TAL); The membrane-bound prenyltransferase cle5 that accepts TAL as its substrate to perform a C-3 geranylgeranylation reaction, in which the pathway-dedicated GGPS cle6 is required to provide GGPP, the other substrate of cle5; the FAD-dependent monooxygenase Cle3 that forms an (S)-epoxide ring at the terminal olefin of the geranylgeranyl group; and the terpene cyclase Cle7 that catalyzes the cyclization of the prenyl group that yields the pentacyclic pathway intermediate chevalone E. Chevalone E can derivatize into seven new oxidized analogs by the cytochrome P450 monooxygenases cle2 (acting at C-20) and cle4 (acting at C-11 and C-12). The protein is Geranylgeranyl pyrophosphate synthase cle6 of Aspergillus versicolor.